The primary structure comprises 60 residues: Large ribosomal subunit protein uL30 (60 aa).

This sequence belongs to the universal ribosomal protein uL30 family. As to quaternary structure, part of the 50S ribosomal subunit.

This Kineococcus radiotolerans (strain ATCC BAA-149 / DSM 14245 / SRS30216) protein is Large ribosomal subunit protein uL30.